A 195-amino-acid polypeptide reads, in one-letter code: Imidazoleglycerol-phosphate dehydratase (195 aa).

The protein belongs to the imidazoleglycerol-phosphate dehydratase family.

It localises to the cytoplasm. The catalysed reaction is D-erythro-1-(imidazol-4-yl)glycerol 3-phosphate = 3-(imidazol-4-yl)-2-oxopropyl phosphate + H2O. It functions in the pathway amino-acid biosynthesis; L-histidine biosynthesis; L-histidine from 5-phospho-alpha-D-ribose 1-diphosphate: step 6/9. The protein is Imidazoleglycerol-phosphate dehydratase of Burkholderia ambifaria (strain MC40-6).